The sequence spans 292 residues: ATP synthase gamma chain (292 aa).

Belongs to the ATPase gamma chain family. In terms of assembly, F-type ATPases have 2 components, CF(1) - the catalytic core - and CF(0) - the membrane proton channel. CF(1) has five subunits: alpha(3), beta(3), gamma(1), delta(1), epsilon(1). CF(0) has three main subunits: a, b and c.

It localises to the cell inner membrane. Its function is as follows. Produces ATP from ADP in the presence of a proton gradient across the membrane. The gamma chain is believed to be important in regulating ATPase activity and the flow of protons through the CF(0) complex. In Magnetococcus marinus (strain ATCC BAA-1437 / JCM 17883 / MC-1), this protein is ATP synthase gamma chain.